Consider the following 34-residue polypeptide: Photosystem II reaction center protein T (34 aa).

Residues 3-23 (SVAYILIFTLTIGTLFFAVAF) form a helical membrane-spanning segment.

It belongs to the PsbT family. In terms of assembly, PSII is composed of 1 copy each of membrane proteins PsbA, PsbB, PsbC, PsbD, PsbE, PsbF, PsbH, PsbI, PsbJ, PsbK, PsbL, PsbM, PsbT, PsbX, PsbY, PsbZ, Psb30/Ycf12, peripheral proteins PsbO, CyanoQ (PsbQ), PsbU, PsbV and a large number of cofactors. It forms dimeric complexes.

It is found in the cellular thylakoid membrane. Found at the monomer-monomer interface of the photosystem II (PS II) dimer, plays a role in assembly and dimerization of PSII. PSII is a light-driven water plastoquinone oxidoreductase, using light energy to abstract electrons from H(2)O, generating a proton gradient subsequently used for ATP formation. In Mastigocladus laminosus (Fischerella sp.), this protein is Photosystem II reaction center protein T.